The following is a 344-amino-acid chain: Uroporphyrinogen decarboxylase (344 aa).

Substrate is bound by residues 26–30, aspartate 76, tyrosine 151, serine 206, and histidine 321; that span reads RQAGR.

Belongs to the uroporphyrinogen decarboxylase family. Homodimer.

Its subcellular location is the cytoplasm. The enzyme catalyses uroporphyrinogen III + 4 H(+) = coproporphyrinogen III + 4 CO2. It functions in the pathway porphyrin-containing compound metabolism; protoporphyrin-IX biosynthesis; coproporphyrinogen-III from 5-aminolevulinate: step 4/4. Functionally, catalyzes the decarboxylation of four acetate groups of uroporphyrinogen-III to yield coproporphyrinogen-III. The chain is Uroporphyrinogen decarboxylase from Sinorhizobium fredii (strain NBRC 101917 / NGR234).